The chain runs to 645 residues: Protein LHY (645 aa).

Position 6 is a phosphoserine (S6). An HTH myb-type domain is found at 19–73 (TITKQRERWTEDEHERFLEALRLYGRAWQRIEEHIGTKTAVQIRSHAQKFFTKLE). Positions 46–69 (WQRIEEHIGTKTAVQIRSHAQKFF) form a DNA-binding region, H-T-H motif. 4 disordered regions span residues 89–127 (IEIPPPRPKRKPNTPYPRKPGNNGTSSSQVSSAKDAKLV), 149–212 (EKTS…GTTV), 410–437 (QNLASKSPASSSDDSDETGVTKLNADSK), and 458–500 (AQKK…TDEN). Over residues 110–120 (NNGTSSSQVSS) the composition is skewed to polar residues. The segment covering 149 to 158 (EKTSTGKENQ) has biased composition (basic and acidic residues). The segment covering 159-169 (DENCSGVSTVN) has biased composition (polar residues). The span at 197 to 207 (VPKKNKDKDGN) shows a compositional bias: basic and acidic residues. The span at 468 to 478 (SCGSNTPSGSD) shows a compositional bias: polar residues. Positions 483 to 498 (ALDKMEKDKEDVKETD) are enriched in basic and acidic residues.

In terms of assembly, homodimer or heterodimer with CCA1. Interacts with CCA1 (via internal domain); independently of photoperiod. Functions probably as part of a large complex. Interacts with CKB1 and CKB3. Interacts with LNK1 and LNK2. In terms of processing, phosphorylated by CK2. As to expression, expressed in leaves, roots, stems, flowers and siliques.

Its subcellular location is the nucleus. Transcription factor involved in the circadian clock. Binds to the promoter region of APRR1/TOC1 and TCP21/CHE to repress their transcription. Represses both CCA1 and itself. May recognize the promoter of JMJ14 to regulates its expression during the night in a circadian manner. This is Protein LHY from Arabidopsis thaliana (Mouse-ear cress).